The primary structure comprises 410 residues: Elongation factor Tu, chloroplastic (410 aa).

One can recognise a tr-type G domain in the interval 10–215 (KPHVNIGTIG…IVDEYIPTPQ (206 aa)). A G1 region spans residues 19 to 26 (GHVDHGKT). A GTP-binding site is contributed by 19–26 (GHVDHGKT). Position 26 (T26) interacts with Mg(2+). A G2 region spans residues 61 to 65 (GITIN). The segment at 82–85 (DCPG) is G3. Residues 82 to 86 (DCPGH) and 137 to 140 (NKAD) contribute to the GTP site. A G4 region spans residues 137–140 (NKAD). Positions 175–177 (SAL) are G5.

This sequence belongs to the TRAFAC class translation factor GTPase superfamily. Classic translation factor GTPase family. EF-Tu/EF-1A subfamily.

The protein resides in the plastid. The protein localises to the chloroplast. The catalysed reaction is GTP + H2O = GDP + phosphate + H(+). Its function is as follows. GTP hydrolase that promotes the GTP-dependent binding of aminoacyl-tRNA to the A-site of ribosomes during protein biosynthesis. The protein is Elongation factor Tu, chloroplastic (tufA) of Cyanidioschyzon merolae (strain NIES-3377 / 10D) (Unicellular red alga).